The sequence spans 258 residues: MTPPSNGQAAETNDHLVQSDNPEHPANLIPSLCAKFWTLGWVTGTGGGASIREDDLVYIAPSGVQKELMKASDIYVLSLAAQAQSLDRRNRVYLRSPPSYKPSQCTPLFLAAFTKRRAGCCIHTHSHWAVLVTLILETQGAGKDREFRINNIEQIKGFGKGFEKSGNLGYHDTLVIPVIENTAHEEDLTEFLEEAMDKYPDTYAVLVRRHGVYVWGDNVHKAKTQCESLDYLFQLAVEMKQLNLPWITDIEPVTPRKS.

Polar residues predominate over residues 1–20; it reads MTPPSNGQAAETNDHLVQSD. A disordered region spans residues 1 to 21; that stretch reads MTPPSNGQAAETNDHLVQSDN. Cys105 is a binding site for substrate. Zn(2+) is bound by residues His123 and His125. Glu153 (proton donor/acceptor) is an active-site residue. A Zn(2+)-binding site is contributed by His210.

Belongs to the aldolase class II family. MtnB subfamily. Zn(2+) is required as a cofactor.

It localises to the cytoplasm. The enzyme catalyses 5-(methylsulfanyl)-D-ribulose 1-phosphate = 5-methylsulfanyl-2,3-dioxopentyl phosphate + H2O. It functions in the pathway amino-acid biosynthesis; L-methionine biosynthesis via salvage pathway; L-methionine from S-methyl-5-thio-alpha-D-ribose 1-phosphate: step 2/6. Its function is as follows. Catalyzes the dehydration of methylthioribulose-1-phosphate (MTRu-1-P) into 2,3-diketo-5-methylthiopentyl-1-phosphate (DK-MTP-1-P). The sequence is that of Methylthioribulose-1-phosphate dehydratase from Chaetomium globosum (strain ATCC 6205 / CBS 148.51 / DSM 1962 / NBRC 6347 / NRRL 1970) (Soil fungus).